We begin with the raw amino-acid sequence, 499 residues long: Maturase K (499 aa).

This sequence belongs to the intron maturase 2 family. MatK subfamily.

Its subcellular location is the plastid. It localises to the chloroplast. Its function is as follows. Usually encoded in the trnK tRNA gene intron. Probably assists in splicing its own and other chloroplast group II introns. The protein is Maturase K of Ceratozamia mexicana (Mexican horncone).